Consider the following 331-residue polypeptide: UDP-GalNAc:beta-1,3-N-acetylgalactosaminyltransferase 1 (331 aa).

Residues 1–20 lie on the Cytoplasmic side of the membrane; the sequence is MASALWTVLPSRMSLRSLKW. Residues 21–43 form a helical; Signal-anchor for type II membrane protein membrane-spanning segment; the sequence is SLLLLSLLSFFVMWYLSLPHYNV. Topologically, residues 44-331 are lumenal; sequence IERVNWMYFY…VMLRNTTCHY (288 aa). Asn72, Asn154, Asn198, Asn212, and Asn326 each carry an N-linked (GlcNAc...) asparagine glycan.

It belongs to the glycosyltransferase 31 family. Mg(2+) serves as cofactor. Higher expression in heart and brain, and to a lesser extent in lung, placenta, kidney and testis. Lower expression in liver, spleen and stomach. No expression in skeletal muscle.

It localises to the golgi apparatus membrane. It catalyses the reaction a globoside Gb3Cer (d18:1(4E)) + UDP-N-acetyl-alpha-D-galactosamine = a globoside Gb4Cer (d18:1(4E)) + UDP + H(+). The protein operates within protein modification; protein glycosylation. Functionally, transfers N-acetylgalactosamine onto globotriaosylceramide. Plays a critical role in preimplantation stage embryonic development. The chain is UDP-GalNAc:beta-1,3-N-acetylgalactosaminyltransferase 1 from Homo sapiens (Human).